An 83-amino-acid chain; its full sequence is Arminin 3b (83 aa).

The N-terminal stretch at methionine 1–alanine 18 is a signal peptide. Residues arginine 19–alanine 57 constitute a propeptide that is removed on maturation. Position 80 is a serine amide (serine 80).

This sequence belongs to the arminin family. In terms of tissue distribution, expressed in entodermal epithelium along the body column.

The protein localises to the secreted. Its subcellular location is the target cell membrane. Its function is as follows. Antimicrobial peptide with a broad-spectrum antimicrobial activity. Keeps its antibacterial activity under a wide range of salt concentrations that mimic physiological conditions of human blood, which is surprising, since Hydra is an obligate freshwater animal with nearly no salt tolerance. Does not affect red blood cells. The chain is Arminin 3b from Hydra vulgaris (Hydra).